A 265-amino-acid chain; its full sequence is Probable cyclic nucleotide phosphodiesterase SynWH7803_1390 (265 aa).

Fe cation is bound by residues Asp9, His11, Asp49, Asn86, His157, His196, and His198. Residues His11, Asp49, and 86–87 (NH) contribute to the AMP site. His198 is a binding site for AMP.

Belongs to the cyclic nucleotide phosphodiesterase class-III family. Requires Fe(2+) as cofactor.

This is Probable cyclic nucleotide phosphodiesterase SynWH7803_1390 from Synechococcus sp. (strain WH7803).